We begin with the raw amino-acid sequence, 258 residues long: Indole-3-glycerol phosphate synthase (258 aa).

The protein belongs to the TrpC family.

It catalyses the reaction 1-(2-carboxyphenylamino)-1-deoxy-D-ribulose 5-phosphate + H(+) = (1S,2R)-1-C-(indol-3-yl)glycerol 3-phosphate + CO2 + H2O. It participates in amino-acid biosynthesis; L-tryptophan biosynthesis; L-tryptophan from chorismate: step 4/5. This is Indole-3-glycerol phosphate synthase from Campylobacter jejuni subsp. jejuni serotype O:23/36 (strain 81-176).